A 1526-amino-acid chain; its full sequence is Ig-like and fibronectin type-III domain-containing protein 2 (1526 aa).

Positions 1–19 are cleaved as a signal peptide; it reads MMRWRLAVLFLTLLASTTG. The segment at 20–39 is disordered; it reads DDTTTKASVSTTTKKGTDGP. At 20–1415 the chain is on the extracellular side; it reads DDTTTKASVS…RRSASKGSSS (1396 aa). A compositionally biased stretch (low complexity) spans 24 to 33; it reads TKASVSTTTK. Positions 39 to 170 constitute an Ig-like C2-type 1 domain; it reads PHLTTDDEGF…ELLEFQVEVL (132 aa). A disulfide bridge links cysteine 61 with cysteine 154. Asparagine 87, asparagine 143, asparagine 158, asparagine 181, asparagine 414, asparagine 427, asparagine 475, asparagine 489, asparagine 533, asparagine 590, asparagine 617, and asparagine 662 each carry an N-linked (GlcNAc...) asparagine glycan. The 92-residue stretch at 379-470 folds into the Fibronectin type-III 1 domain; the sequence is APRGKRDVDF…VRNIASTNVH (92 aa). One can recognise a Fibronectin type-III 2 domain in the interval 587–678; it reads APGNVTISEL…TAKLFSTLPT (92 aa). Residues 682–724 form the WR1 domain; it reads PLCTIGEPIYMNDGRVMICDAVNPCPNGFRCTGAGSDLSYCCP. Residues asparagine 754, asparagine 871, asparagine 906, asparagine 939, asparagine 979, asparagine 1004, and asparagine 1049 are each glycosylated (N-linked (GlcNAc...) asparagine). 2 Fibronectin type-III domains span residues 827–914 and 924–1020; these read AVRN…TKPA and APEK…AQKD. Residues 1116-1207 form the Ig-like C2-type 2 domain; it reads ASVTMKKDKI…SRVEASSEVI (92 aa). A disulfide bridge connects residues cysteine 1137 and cysteine 1190. Asparagine 1250 is a glycosylation site (N-linked (GlcNAc...) asparagine). Residues 1314-1406 form the Fibronectin type-III 5 domain; that stretch reads APSEVSNVRI…SAIPKDSEPR (93 aa). The helical transmembrane segment at 1416–1436 threads the bilayer; the sequence is AFWIVVILVVFGVLIAGLAVL. Over 1437–1526 the chain is Cytoplasmic; sequence SKRRELPYPI…NGMRYAKLET (90 aa). The segment at 1485 to 1518 is disordered; the sequence is SATTGTAAATQSEWQSANLEANSTTDNSHEYRNG. A compositionally biased stretch (polar residues) spans 1495–1510; that stretch reads QSEWQSANLEANSTTD.

It is found in the cell membrane. This Caenorhabditis elegans protein is Ig-like and fibronectin type-III domain-containing protein 2.